The sequence spans 208 residues: Outer-membrane lipoprotein carrier protein (208 aa).

The signal sequence occupies residues 1–22 (MKKRLCAVLLASPLLFSAAVFA).

It belongs to the LolA family. As to quaternary structure, monomer.

The protein localises to the periplasm. In terms of biological role, participates in the translocation of lipoproteins from the inner membrane to the outer membrane. Only forms a complex with a lipoprotein if the residue after the N-terminal Cys is not an aspartate (The Asp acts as a targeting signal to indicate that the lipoprotein should stay in the inner membrane). In Shewanella baltica (strain OS195), this protein is Outer-membrane lipoprotein carrier protein.